A 1140-amino-acid chain; its full sequence is MSKRKQFLDSVHHEHVQDFLNFIKLHKDGADPFDLAEILAELQKSQRQDLWDRQLKLLQHSLTVSPSERWITGAEEDAGDMEVEVSEEQIQTMAVIEGVTIVSTVSVDALQEKDNYTTLLKCAQMLNAIESALPLSQTPLQQAIHWLFECWWRRDLQGKEELGWTAFLVCLENTVTLDKPVSELRRLCSLREVLLSVDFGSEKGQQVIDPLLQCFFRASHIKQEEGKRFLAFLFSWNDNFIRMIHETIKNQLQFFPKTLSVHVAEIYFRAWRKASGPFLEEIESACIQDLMQHALLLHRNSPVHSKVRQILTYFHKQKFREGVDEMLHRLYKPVLWKALKATNAEVRANATLLFTEAFPIHDPNMSSEMVDQAVQKQLDLLFALLDDPQPLVRSSAVLGVCSVLARCWEVIPSAVITDLLEKLILQLANDTSSPDVRCSVFMCMSIILDNSLSHPLMEKLLPALKSSLHDSSEKVRVAFVGMLLKIKAARAAKFWKVCSLEHLLARLEMDSAPVSKRIVNLLFNSFFPVNQPETVWCERCVTLIQTNPGAARKFYQHAYLYTAPANIVKLMLVIRKCLNVCIQNAGDEEFASSNKENSTLLEDVLSVQDTSSMASLLEILVILWKSVQKSLMANQEAFKYTTAKFGSSLPQYLKIFQEERCKAPLILLASLLPASALPALRSKVMSHLRSLKAGAAVTTYSQTLECLCSWGQISHIVELIENWLTEAAPVKEQGDEESTGKVHFDVLEESKPDLGLDYLDYMLLRPKTRECLLTLPLDQMRPLHKALNKWKSLLFSSLSGSEVSVAAIETALRAFIFHGRLCIHLQHKFPEEREFLKSLEHSVSWVEKRVLPFLVNSSSDQQLSLSTKIVESCVTVCKNVLRVSVGDSDFRDHLLQHVASVLQTEKGYMCIPHLLALLTEIAHGCLSQKAEGQEDQLSLTIRILTNIFQKVVEILAHRLRKDKEEGQELCCSSEEALHDFLLVTKFTSERSEFMTGVFSSLCAAVIIDISRPLQKISHVEELLMPETVNDLPPLSSTILKVTLGCPAVTRFFLSELSSSIESEAIDSITQWAAVTHILTIIKESDAFIVELKDIAGSVRRQIQNYYNSISENSDDIQRTIYESTVKMLNDVLISCQQTNN.

The HEAT repeat unit spans residues 460–493 (LLPALKSSLHDSSEKVRVAFVGMLLKIKAARAAK).

As to quaternary structure, component of the condensin-2 complex, which contains the smc2 and smc4 heterodimer, and three non SMC subunits that probably regulate the complex: ncaph2, ncapd3 and ncapg2.

The protein resides in the nucleus. In terms of biological role, regulatory subunit of the condensin-2 complex, a complex which establishes mitotic chromosome architecture and is involved in physical rigidity of the chromatid axis. Plays a role in the embryonic development of the head and kidney structures. The sequence is that of Condensin-2 complex subunit G2 from Danio rerio (Zebrafish).